Reading from the N-terminus, the 341-residue chain is S-adenosylmethionine:tRNA ribosyltransferase-isomerase (341 aa).

Belongs to the QueA family. In terms of assembly, monomer.

It is found in the cytoplasm. The enzyme catalyses 7-aminomethyl-7-carbaguanosine(34) in tRNA + S-adenosyl-L-methionine = epoxyqueuosine(34) in tRNA + adenine + L-methionine + 2 H(+). The protein operates within tRNA modification; tRNA-queuosine biosynthesis. In terms of biological role, transfers and isomerizes the ribose moiety from AdoMet to the 7-aminomethyl group of 7-deazaguanine (preQ1-tRNA) to give epoxyqueuosine (oQ-tRNA). The sequence is that of S-adenosylmethionine:tRNA ribosyltransferase-isomerase from Symbiobacterium thermophilum (strain DSM 24528 / JCM 14929 / IAM 14863 / T).